We begin with the raw amino-acid sequence, 178 residues long: V-type proton ATPase subunit c''2 (178 aa).

The Lumenal portion of the chain corresponds to 1–24 (MSGVAIHASSWGAALVRISPYTFS). Residues 25–45 (AIGIAISIGVSVLGAAWGIYI) form a helical membrane-spanning segment. Residues 46–64 (TGSSLIGAAIEAPRITSKN) lie on the Cytoplasmic side of the membrane. A helical membrane pass occupies residues 65-85 (LISVIFCEAVAIYGVIVAIIL). The Lumenal segment spans residues 86–108 (QTKLESVPSSKMYDAESLRAGYA). A helical transmembrane segment spans residues 109 to 129 (IFASGIIVGFANLVCGLCVGI). The Cytoplasmic segment spans residues 130-147 (IGSSCALSDAQNSTLFVK). A helical membrane pass occupies residues 148–168 (ILVIEIFGSALGLFGVIVGII). Topologically, residues 169–178 (MSAQATWPTK) are lumenal.

Belongs to the V-ATPase proteolipid subunit family. In terms of assembly, V-ATPase is a heteromultimeric enzyme composed of a peripheral catalytic V1 complex (components A to H) attached to an integral membrane V0 proton pore complex (components: a, c, c'', d and e). The proteolipid components c and c'' are present as a hexameric ring that forms the proton-conducting pore. Interacts with APD2.

The protein localises to the endoplasmic reticulum membrane. The protein resides in the golgi apparatus membrane. Functionally, proton-conducting pore forming subunit of the membrane integral V0 complex of vacuolar ATPase. V-ATPase is responsible for acidifying a variety of intracellular compartments in eukaryotic cells. The chain is V-type proton ATPase subunit c''2 (VHA-c''2) from Arabidopsis thaliana (Mouse-ear cress).